The primary structure comprises 402 residues: Galactoside 2-alpha-L-fucosyltransferase (402 aa).

Topologically, residues 1-6 are cytoplasmic; it reads MRYNSN. Residues 7–27 form a helical; Signal-anchor for type II membrane protein membrane-spanning segment; sequence YLMYFCLVLGIFANIYVIIKI. At 28-402 the chain is on the lumenal side; the sequence is TLGSSHILEY…TDLNGKISKY (375 aa). Residues N119, N175, and N301 are each glycosylated (N-linked (GlcNAc...) asparagine).

Belongs to the glycosyltransferase 11 family. In terms of assembly, may form oligomers. N-glycosylated. In terms of tissue distribution, expression is restricted to pharyngeal neurons and gland cells.

The protein resides in the golgi apparatus. The protein localises to the golgi stack membrane. It functions in the pathway protein modification; protein glycosylation. Its function is as follows. Selectively catalyzes the addition of fucose in alpha 1-2 linkage to Gal-beta-(1-&gt;3)-GalNAc-alpha-R, Gal-beta-(1-&gt;3)-(GlcNAc-beta-(1-&gt;6))-GalNAc-alpha-R and Gal-beta-(1-&gt;3)-GalNAc acceptors but not Gal-beta-(1-&gt;3)-GlcNAc-beta-(1-&gt;3)-Gal-beta-(1-&gt;4)-Glc in vitro. The protein is Galactoside 2-alpha-L-fucosyltransferase of Caenorhabditis elegans.